The chain runs to 380 residues: Glucose-1-phosphate adenylyltransferase (380 aa).

Alpha-D-glucose 1-phosphate contacts are provided by residues G164, 179–180, and S190; that span reads EK.

The protein belongs to the bacterial/plant glucose-1-phosphate adenylyltransferase family. As to quaternary structure, homotetramer.

It carries out the reaction alpha-D-glucose 1-phosphate + ATP + H(+) = ADP-alpha-D-glucose + diphosphate. It functions in the pathway glycan biosynthesis; glycogen biosynthesis. Functionally, involved in the biosynthesis of ADP-glucose, a building block required for the elongation reactions to produce glycogen. Catalyzes the reaction between ATP and alpha-D-glucose 1-phosphate (G1P) to produce pyrophosphate and ADP-Glc. The protein is Glucose-1-phosphate adenylyltransferase of Streptococcus gordonii (strain Challis / ATCC 35105 / BCRC 15272 / CH1 / DL1 / V288).